The following is a 171-amino-acid chain: 3-hydroxydecanoyl-[acyl-carrier-protein] dehydratase (171 aa).

The active site involves H70.

The protein belongs to the thioester dehydratase family. FabA subfamily. In terms of assembly, homodimer.

It localises to the cytoplasm. It carries out the reaction a (3R)-hydroxyacyl-[ACP] = a (2E)-enoyl-[ACP] + H2O. It catalyses the reaction (3R)-hydroxydecanoyl-[ACP] = (2E)-decenoyl-[ACP] + H2O. The catalysed reaction is (2E)-decenoyl-[ACP] = (3Z)-decenoyl-[ACP]. It functions in the pathway lipid metabolism; fatty acid biosynthesis. Functionally, necessary for the introduction of cis unsaturation into fatty acids. Catalyzes the dehydration of (3R)-3-hydroxydecanoyl-ACP to E-(2)-decenoyl-ACP and then its isomerization to Z-(3)-decenoyl-ACP. Can catalyze the dehydratase reaction for beta-hydroxyacyl-ACPs with saturated chain lengths up to 16:0, being most active on intermediate chain length. This is 3-hydroxydecanoyl-[acyl-carrier-protein] dehydratase from Ectopseudomonas mendocina (strain ymp) (Pseudomonas mendocina).